The chain runs to 197 residues: dTTP/UTP pyrophosphatase (197 aa).

The Proton acceptor role is filled by Asp-70.

It belongs to the Maf family. YhdE subfamily. Requires a divalent metal cation as cofactor.

It localises to the cytoplasm. The catalysed reaction is dTTP + H2O = dTMP + diphosphate + H(+). It catalyses the reaction UTP + H2O = UMP + diphosphate + H(+). Functionally, nucleoside triphosphate pyrophosphatase that hydrolyzes dTTP and UTP. May have a dual role in cell division arrest and in preventing the incorporation of modified nucleotides into cellular nucleic acids. This chain is dTTP/UTP pyrophosphatase, found in Methanosarcina barkeri (strain Fusaro / DSM 804).